The chain runs to 386 residues: Cytochrome b (386 aa).

The next 4 membrane-spanning stretches (helical) occupy residues L32 to M52, Y76 to G98, V113 to C133, and F179 to M199. Residues H82 and H96 each contribute to the heme b site. 2 residues coordinate heme b: H183 and H197. H202 serves as a coordination point for a ubiquinone. 4 helical membrane-spanning segments follow: residues F225–F245, L289–D309, I321–Q341, and F348–P368.

Belongs to the cytochrome b family. Fungal cytochrome b-c1 complex contains 10 subunits; 3 respiratory subunits, 2 core proteins and 5 low-molecular weight proteins. Cytochrome b-c1 complex is a homodimer. It depends on heme b as a cofactor.

The protein resides in the mitochondrion inner membrane. Its function is as follows. Component of the ubiquinol-cytochrome c reductase complex (complex III or cytochrome b-c1 complex) that is part of the mitochondrial respiratory chain. The b-c1 complex mediates electron transfer from ubiquinol to cytochrome c. Contributes to the generation of a proton gradient across the mitochondrial membrane that is then used for ATP synthesis. The chain is Cytochrome b (COB) from Wickerhamomyces canadensis (Yeast).